The primary structure comprises 606 residues: MNLFTPLMLTAMFILLLPIIMSNTQLYKNSLYPHYVKTTISYAFIISMIPTMMFISSGQEAIISNWHWLSIQTLKLSLSFKMDYFSTIFIPVALFVTWSIMEFSMWYMHSDPYINRFFKYLLMFLITMMILVTANNLFQLFIGWEGVGIMSFLLIGWWYGRADANTAALQAILYNRIGDVGFIMAMAWFLTNSNAWDFQQIFITQHENLNIPLLGLLLAATGKSAQFGLHPWLPSAMEGPTPVSALLHSSTMVVAGVFLLIRFYPLMEQNKTMQTLTLCLGAITTLFTAICALTQNDIKKVVAFSTSSQLGLMIVTIGINQPYLAFLHICTHAFFKAMLFMCSGSIIHSLNDEQDIRKMGGLYKPMPFTTTSLIIGSLALTGMPFLTGFYSKDLIIETANTSYTNAWALLITLIATSLTAAYSTRIMFFVLLGQPRFNTLNLINENNTHLINSIKRLLIGSIFAGYLISYNIPPTTIPQMTMPYYLKLTALAVTIAGFILALELNLAAKNLKFMYPSNLFKFSNLLGYFPIVMHRLPSKMSLTMSQKSASMLLDMIWLENVLPKSISLFQMKMSTTVSNQKGLVKLYFLSFMITLALSLILLNSHE.

Helical transmembrane passes span 1–21 (MNLF…PIIM), 43–63 (AFII…EAII), 88–108 (IFIP…MWYM), 117–137 (FFKY…ANNL), 140–160 (LFIG…WWYG), 171–191 (AILY…WFLT), 209–229 (LNIP…QFGL), 241–261 (TPVS…FLLI), 273–293 (MQTL…ICAL), 310–330 (LGLM…LHIC), 366–386 (MPFT…MPFL), 413–433 (LIAT…VLLG), 457–477 (LLIG…PTTI), 488–508 (LTAL…NLAA), 513–533 (FMYP…PIVM), and 582–602 (GLVK…LILL).

The protein belongs to the complex I subunit 5 family. Core subunit of respiratory chain NADH dehydrogenase (Complex I) which is composed of 45 different subunits.

It localises to the mitochondrion inner membrane. It carries out the reaction a ubiquinone + NADH + 5 H(+)(in) = a ubiquinol + NAD(+) + 4 H(+)(out). Core subunit of the mitochondrial membrane respiratory chain NADH dehydrogenase (Complex I) which catalyzes electron transfer from NADH through the respiratory chain, using ubiquinone as an electron acceptor. Essential for the catalytic activity and assembly of complex I. This is NADH-ubiquinone oxidoreductase chain 5 (MT-ND5) from Felis catus (Cat).